We begin with the raw amino-acid sequence, 121 residues long: Large ribosomal subunit protein uL18 (121 aa).

This sequence belongs to the universal ribosomal protein uL18 family. As to quaternary structure, part of the 50S ribosomal subunit; part of the 5S rRNA/L5/L18/L25 subcomplex. Contacts the 5S and 23S rRNAs.

Its function is as follows. This is one of the proteins that bind and probably mediate the attachment of the 5S RNA into the large ribosomal subunit, where it forms part of the central protuberance. The protein is Large ribosomal subunit protein uL18 of Roseiflexus castenholzii (strain DSM 13941 / HLO8).